A 2048-amino-acid chain; its full sequence is Fanconi anemia group M protein (2048 aa).

A compositionally biased stretch (polar residues) spans Met1 to Ser37. The disordered stretch occupies residues Met1–Ala45. Ser34 is modified (phosphoserine). Positions Ile98 to Gln266 constitute a Helicase ATP-binding domain. Leu111–Thr118 is a binding site for ATP. The DEAH box signature appears at Asp214–His217. The Helicase C-terminal domain maps to Lys452–Arg627. The interval Ser661–Glu800 is interaction with CENPS/CENPSX. 3 disordered regions span residues Asn1433–Lys1476, Leu1518–Ser1540, and Ile1668–Leu1809. A compositionally biased stretch (acidic residues) spans Leu1518–Gln1538. 2 positions are modified to phosphoserine: Ser1673 and Ser1674. Polar residues-rich tracts occupy residues His1703–Val1745, His1753–Asp1767, and Glu1786–Lys1797. The interaction with FAAP24 stretch occupies residues Leu1727–Ile2048.

The protein belongs to the DEAD box helicase family. DEAH subfamily. FANCM sub-subfamily. As to quaternary structure, component of the Fanconi anemia (FA) core complex, which consists of CENPS, CENPX, FANCA, FANCB, FANCC, FANCE, FANCF, FANCG, FANCL, FANCM, FAAP24 and FAAP100. The FA core complex associates with Bloom syndrome (BLM) complex, which consists of at least BLM, DNA topoisomerase 3-alpha/TOP3A, RMI1/BLAP75, RPA1/RPA70 and RPA2/RPA32. This supercomplex between FA and BLM complexes has been called BRAFT. Forms a discrete complex with CENPS and CENPX, called FANCM-MHF; this interaction stimulates DNA binding and replication fork remodeling by FANCM and stabilizes the binding partners. Forms a heterodimer with FAAP24; this interaction increases FANCM single-stranded DNA-binding activity. In terms of processing, phosphorylated; hyperphosphorylated in response to genotoxic stress. Expressed in germ cells of fetal and adult ovaries. In fetal ovaries, it is present in oogonia but expression is stronger in pachytene stage oocytes. Expressed in oocytes arrested at the diplotene stage of prophase I during the last trimester of pregnancy and in adults. Expressed in the testis.

It localises to the nucleus. It carries out the reaction ATP + H2O = ADP + phosphate + H(+). Its function is as follows. DNA-dependent ATPase component of the Fanconi anemia (FA) core complex. Required for the normal activation of the FA pathway, leading to monoubiquitination of the FANCI-FANCD2 complex in response to DNA damage, cellular resistance to DNA cross-linking drugs, and prevention of chromosomal breakage. In complex with CENPS and CENPX, binds double-stranded DNA (dsDNA), fork-structured DNA (fsDNA) and Holliday junction substrates. Its ATP-dependent DNA branch migration activity can process branched DNA structures such as a movable replication fork. This activity is strongly stimulated in the presence of CENPS and CENPX. In complex with FAAP24, efficiently binds to single-strand DNA (ssDNA), splayed-arm DNA, and 3'-flap substrates. In vitro, on its own, strongly binds ssDNA oligomers and weakly fsDNA, but does not bind to dsDNA. This Homo sapiens (Human) protein is Fanconi anemia group M protein (FANCM).